The primary structure comprises 146 residues: Large ribosomal subunit protein uL11 (146 aa).

Belongs to the universal ribosomal protein uL11 family. In terms of assembly, part of the ribosomal stalk of the 50S ribosomal subunit. Interacts with L10 and the large rRNA to form the base of the stalk. L10 forms an elongated spine to which L12 dimers bind in a sequential fashion forming a multimeric L10(L12)X complex. In terms of processing, one or more lysine residues are methylated.

In terms of biological role, forms part of the ribosomal stalk which helps the ribosome interact with GTP-bound translation factors. The polypeptide is Large ribosomal subunit protein uL11 (Wolbachia pipientis wMel).